A 197-amino-acid chain; its full sequence is Dephospho-CoA kinase (197 aa).

A DPCK domain is found at 2 to 197 (IVGLTGGIAS…YQQILSLNAA (196 aa)). Residue 10–15 (ASGKTL) participates in ATP binding.

This sequence belongs to the CoaE family.

The protein localises to the cytoplasm. It catalyses the reaction 3'-dephospho-CoA + ATP = ADP + CoA + H(+). It functions in the pathway cofactor biosynthesis; coenzyme A biosynthesis; CoA from (R)-pantothenate: step 5/5. Catalyzes the phosphorylation of the 3'-hydroxyl group of dephosphocoenzyme A to form coenzyme A. This is Dephospho-CoA kinase from Dichelobacter nodosus (Bacteroides nodosus).